The primary structure comprises 568 residues: Sulfate adenylyltransferase (568 aa).

The interval 1–162 is N-terminal; the sequence is MANSPHGGVL…IEAVNKLNHY (162 aa). The segment at 163-388 is catalytic; that stretch reads DYVALRYSPA…LRESSPPRAT (226 aa). Position 190 (Gln190) interacts with sulfate. Residues 190–193 and 284–287 each bind ATP; these read QTRN and GRDH. Active-site residues include Thr191, Arg192, and Asn193. Residue Arg192 coordinates sulfate. A sulfate-binding site is contributed by Ala288. Val326 contributes to the ATP binding site. Residues 389 to 568 form an allosteric regulation domain; adenylyl-sulfate kinase-like region; sequence QGFTIFLTGY…LESEGYFDRL (180 aa). 3'-phosphoadenylyl sulfate is bound by residues 428–431, Arg445, 471–472, and Arg510; these read DTVR and IA.

In the N-terminal section; belongs to the sulfate adenylyltransferase family. It in the C-terminal section; belongs to the APS kinase family. As to quaternary structure, homohexamer. Dimer of trimers.

Its subcellular location is the cytoplasm. It catalyses the reaction sulfate + ATP + H(+) = adenosine 5'-phosphosulfate + diphosphate. Its pathway is sulfur metabolism; hydrogen sulfide biosynthesis; sulfite from sulfate: step 1/3. Allosterically inhibited by 3'-phosphoadenosine 5'-phosphosulfate (PAPS). Its function is as follows. Catalyzes the first intracellular reaction of sulfate assimilation, forming adenosine-5'-phosphosulfate (APS) from inorganic sulfate and ATP. Plays an important role in sulfate activation as a component of the biosynthesis pathway of sulfur-containing amino acids. The sequence is that of Sulfate adenylyltransferase from Aspergillus terreus.